We begin with the raw amino-acid sequence, 240 residues long: 1-(5-phosphoribosyl)-5-[(5-phosphoribosylamino)methylideneamino] imidazole-4-carboxamide isomerase (240 aa).

The active-site Proton acceptor is the Asp8. Asp129 functions as the Proton donor in the catalytic mechanism.

Belongs to the HisA/HisF family.

The protein resides in the cytoplasm. It carries out the reaction 1-(5-phospho-beta-D-ribosyl)-5-[(5-phospho-beta-D-ribosylamino)methylideneamino]imidazole-4-carboxamide = 5-[(5-phospho-1-deoxy-D-ribulos-1-ylimino)methylamino]-1-(5-phospho-beta-D-ribosyl)imidazole-4-carboxamide. The protein operates within amino-acid biosynthesis; L-histidine biosynthesis; L-histidine from 5-phospho-alpha-D-ribose 1-diphosphate: step 4/9. The chain is 1-(5-phosphoribosyl)-5-[(5-phosphoribosylamino)methylideneamino] imidazole-4-carboxamide isomerase from Oceanobacillus iheyensis (strain DSM 14371 / CIP 107618 / JCM 11309 / KCTC 3954 / HTE831).